The sequence spans 164 residues: Axial regulator YABBY 5 (164 aa).

The C4-type zinc-finger motif lies at 16-43 (CNFCNIILAVNVPCSSLFDIVTVRCGHC).

Belongs to the YABBY family. As to quaternary structure, binds to LUG and LUH; these complexes promote adaxial cell identity in leaves as well as embryonic shoot apical meristem (SAM) initiation and postembryonic SAM maintenance. Interacts with SPL/NZZ and SPEAR2.

Its subcellular location is the nucleus. Its function is as follows. Promotes adaxial cell identity. Regulates the initiation of embryonic shoot apical meristem (SAM) development. The chain is Axial regulator YABBY 5 (YAB5) from Arabidopsis thaliana (Mouse-ear cress).